We begin with the raw amino-acid sequence, 225 residues long: Putative 5'-nucleotidase alr3139 (225 aa).

A divalent metal cation contacts are provided by Asp-8, Asp-9, Ser-37, and Asn-88.

The protein belongs to the SurE nucleotidase family. A divalent metal cation serves as cofactor.

It is found in the cytoplasm. The enzyme catalyses a ribonucleoside 5'-phosphate + H2O = a ribonucleoside + phosphate. Nucleotidase that shows phosphatase activity on nucleoside 5'-monophosphates. This is Putative 5'-nucleotidase alr3139 from Synechocystis sp. (strain ATCC 27184 / PCC 6803 / Kazusa).